A 403-amino-acid polypeptide reads, in one-letter code: Phosphoglycerate kinase (403 aa).

Substrate contacts are provided by residues 21 to 23, Arg-36, 59 to 62, Arg-118, and Arg-151; these read DFN and HLGR. ATP is bound by residues Lys-202, Glu-328, and 354–357; that span reads GGDS.

It belongs to the phosphoglycerate kinase family. As to quaternary structure, monomer.

It is found in the cytoplasm. The enzyme catalyses (2R)-3-phosphoglycerate + ATP = (2R)-3-phospho-glyceroyl phosphate + ADP. The protein operates within carbohydrate degradation; glycolysis; pyruvate from D-glyceraldehyde 3-phosphate: step 2/5. This Akkermansia muciniphila (strain ATCC BAA-835 / DSM 22959 / JCM 33894 / BCRC 81048 / CCUG 64013 / CIP 107961 / Muc) protein is Phosphoglycerate kinase.